The following is a 283-amino-acid chain: Tetraspanin-33 (283 aa).

At 1 to 24 the chain is on the cytoplasmic side; the sequence is MARRPRAPAASGEEFSFVSPLVKY. Residues 25 to 45 traverse the membrane as a helical segment; that stretch reads LLFFFNMLFWVISMVMVAVGV. Residues 46–64 lie on the Extracellular side of the membrane; that stretch reads YARLMKHAEAALACLAVDP. The chain crosses the membrane as a helical span at residues 65–85; the sequence is AILLIVVGVLMFLLTFCGCIG. Over 86 to 96 the chain is Cytoplasmic; that stretch reads SLRENICLLQT. A helical transmembrane segment spans residues 97 to 117; that stretch reads FSLCLTAVFLLQLAAGILGFV. Residues 118-235 lie on the Extracellular side of the membrane; that stretch reads FSDKARGKVS…DKLVNWIHSN (118 aa). 4 disulfide bridges follow: Cys-156–Cys-224, Cys-157–Cys-189, Cys-173–Cys-183, and Cys-190–Cys-203. Asn-172 carries an N-linked (GlcNAc...) asparagine glycan. The chain crosses the membrane as a helical span at residues 236–256; that stretch reads LFLLGGVALGLAIPQLVGILL. Over 257–283 the chain is Cytoplasmic; it reads SQILVNQIKDQIKLQLYNQQHRADPWY.

This sequence belongs to the tetraspanin (TM4SF) family. As to quaternary structure, homodimer; disulfide-linked. Interacts (via extracellular domain) with ADAM10 (via extracellular domain). Interacts (via cytoplasmic domain) with PLEKHA7 (via WW domains); the interaction is dependent on PDZD11 being bound to PLEKHA7 and facilitates the docking of ADAM10 to zonula adherens. In terms of tissue distribution, predominantly expressed in erythroblasts.

It is found in the cell membrane. Its subcellular location is the cell junction. The protein resides in the adherens junction. The protein localises to the cytoplasm. Its function is as follows. Part of TspanC8 subgroup, composed of 6 members that interact with the transmembrane metalloprotease ADAM10. This interaction is required for ADAM10 exit from the endoplasmic reticulum and for enzymatic maturation and trafficking to the cell surface as well as substrate specificity. Different TspanC8/ADAM10 complexes have distinct substrates. Plays an important role in normal erythropoiesis. It has a role in the differentiation of erythroid progenitors. Negatively regulates ligand-induced Notch activity probably by regulating ADAM10 activity. Mediates docking of ADAM10 to zonula adherens by interacting with ADAM10 and, in a PDZD11-dependent manner, with the zonula adherens protein PLEKHA7. The chain is Tetraspanin-33 from Homo sapiens (Human).